A 208-amino-acid polypeptide reads, in one-letter code: Holliday junction branch migration complex subunit RuvA (208 aa).

Residues 1 to 64 (MIGRLHGTVA…DDGQALYGFA (64 aa)) form a domain I region. The domain II stretch occupies residues 65–143 (SRAERDLFRV…GLLPAASGGV (79 aa)). Positions 139–162 (ASGGVPARTGSGEQLDAPAGPQGS) are disordered. Residues 144–157 (PARTGSGEQLDAPA) form a flexible linker region. The tract at residues 158-208 (GPQGSREDAVSALVALGYKPAEAGRLVNAVPGANDLPSEELIRRALQAAVR) is domain III.

The protein belongs to the RuvA family. In terms of assembly, homotetramer. Forms an RuvA(8)-RuvB(12)-Holliday junction (HJ) complex. HJ DNA is sandwiched between 2 RuvA tetramers; dsDNA enters through RuvA and exits via RuvB. An RuvB hexamer assembles on each DNA strand where it exits the tetramer. Each RuvB hexamer is contacted by two RuvA subunits (via domain III) on 2 adjacent RuvB subunits; this complex drives branch migration. In the full resolvosome a probable DNA-RuvA(4)-RuvB(12)-RuvC(2) complex forms which resolves the HJ.

Its subcellular location is the cytoplasm. The RuvA-RuvB-RuvC complex processes Holliday junction (HJ) DNA during genetic recombination and DNA repair, while the RuvA-RuvB complex plays an important role in the rescue of blocked DNA replication forks via replication fork reversal (RFR). RuvA specifically binds to HJ cruciform DNA, conferring on it an open structure. The RuvB hexamer acts as an ATP-dependent pump, pulling dsDNA into and through the RuvAB complex. HJ branch migration allows RuvC to scan DNA until it finds its consensus sequence, where it cleaves and resolves the cruciform DNA. The sequence is that of Holliday junction branch migration complex subunit RuvA from Alkalilimnicola ehrlichii (strain ATCC BAA-1101 / DSM 17681 / MLHE-1).